A 229-amino-acid chain; its full sequence is uncharacterized protein (229 aa).

Transmembrane regions (helical) follow at residues 21–41, 56–76, 83–103, 109–129, 141–161, 162–182, and 202–222; these read IYSLVGMGVGLSAFVSYLMLY, MIYYGAAIIELILVFVASGAA, ALPIFLIYSALNGFTLSFIIV, TVFQAFLSSAAVFFAMSIIGV, AMFAALIGVVVASLINLFIGS, GMMSYVISVISVLIFSGLIAS, and WAVAMALSLYLDFINLFISLL.

This sequence belongs to the BI1 family.

It is found in the cell membrane. This is an uncharacterized protein from Streptococcus pyogenes serotype M6 (strain ATCC BAA-946 / MGAS10394).